The primary structure comprises 207 residues: Protein-L-isoaspartate O-methyltransferase (207 aa).

S56 is an active-site residue.

This sequence belongs to the methyltransferase superfamily. L-isoaspartyl/D-aspartyl protein methyltransferase family.

The protein localises to the cytoplasm. The catalysed reaction is [protein]-L-isoaspartate + S-adenosyl-L-methionine = [protein]-L-isoaspartate alpha-methyl ester + S-adenosyl-L-homocysteine. Functionally, catalyzes the methyl esterification of L-isoaspartyl residues in peptides and proteins that result from spontaneous decomposition of normal L-aspartyl and L-asparaginyl residues. It plays a role in the repair and/or degradation of damaged proteins. This chain is Protein-L-isoaspartate O-methyltransferase, found in Pyrobaculum islandicum (strain DSM 4184 / JCM 9189 / GEO3).